A 1271-amino-acid polypeptide reads, in one-letter code: Chitin synthase 4 (1271 aa).

Disordered stretches follow at residues 1–45 (MPPT…SFDH) and 58–117 (PNHP…ERPS). A compositionally biased stretch (polar residues) spans 21–30 (APDTQESSPA). 2 consecutive transmembrane segments (helical) span residues 165–185 (WWIRITWMMTWWIPSFLLVHL) and 201–221 (LAIFMMICLACAVVLFYIIFF). Asn407 is a glycosylation site (N-linked (GlcNAc...) asparagine). The helical transmembrane segment at 473 to 493 (LLLAFSIILIATIASKFLAAL) threads the bilayer. Residues Asn713 and Asn836 are each glycosylated (N-linked (GlcNAc...) asparagine). Transmembrane regions (helical) follow at residues 867 to 887 (LLGTIILPATCGYLIYLVIVV), 894 to 914 (IPVISLAMIGATYGLQALIFI), and 919 to 939 (FMLIGWMLVYILAFPVWSVFL). Positions 999 to 1081 (HSESPAPSEK…DKSFIRGSKP (83 aa)) are disordered. The segment covering 1027–1037 (RSPSFHSSASE) has biased composition (polar residues). N-linked (GlcNAc...) asparagine glycosylation is found at Asn1055 and Asn1161. The DEK-C domain maps to 1213 to 1269 (EVQDEEVLDKLKTWLSKQDLMSVTKRQTREAIYTLFPNAGLQNRAGWLNEQIDKILS).

This sequence belongs to the chitin synthase family.

The protein localises to the cell membrane. It carries out the reaction [(1-&gt;4)-N-acetyl-beta-D-glucosaminyl](n) + UDP-N-acetyl-alpha-D-glucosamine = [(1-&gt;4)-N-acetyl-beta-D-glucosaminyl](n+1) + UDP + H(+). In terms of biological role, polymerizes chitin, a structural polymer of the cell wall and septum, by transferring the sugar moiety of UDP-GlcNAc to the non-reducing end of the growing chitin polymer. Produces a large proportion of the chitin that is not deacetylated to chitosan. The protein is Chitin synthase 4 of Cryptococcus neoformans var. grubii serotype A (strain H99 / ATCC 208821 / CBS 10515 / FGSC 9487) (Filobasidiella neoformans var. grubii).